A 242-amino-acid chain; its full sequence is Small ribosomal subunit protein uS2 (242 aa).

Belongs to the universal ribosomal protein uS2 family.

The polypeptide is Small ribosomal subunit protein uS2 (Shewanella baltica (strain OS223)).